A 1199-amino-acid polypeptide reads, in one-letter code: Metabotropic glutamate receptor 1 (1199 aa).

The signal sequence occupies residues 1–18; the sequence is MVRLLLIFFPMIFLEMSI. Residues 19-592 lie on the Extracellular side of the membrane; it reads LPRMPDRKVL…VRYLEWSDIE (574 aa). C67 and C109 form a disulfide bridge. Y74 contacts L-glutamate. An N-linked (GlcNAc...) asparagine glycan is attached at N98. L-glutamate is bound by residues S165 and 186-188; that span reads SAT. A glycan (N-linked (GlcNAc...) asparagine) is linked at N223. Y236 serves as a coordination point for L-glutamate. A disulfide bridge connects residues C289 and C291. L-glutamate is bound at residue D318. A disulfide bridge links C378 with C394. N397 carries N-linked (GlcNAc...) asparagine glycosylation. K409 is a binding site for L-glutamate. A disulfide bridge connects residues C432 and C439. N515 carries N-linked (GlcNAc...) asparagine glycosylation. A helical membrane pass occupies residues 593 to 615; sequence SIIAIAFSCLGILVTLFVTLIFV. Over 616 to 629 the chain is Cytoplasmic; that stretch reads LYRDTPVVKSSSRE. Residues 630–650 traverse the membrane as a helical segment; that stretch reads LCYIILAGIFLGYVCPFTLIA. Over 651-658 the chain is Extracellular; it reads KPTTTSCY. An intrachain disulfide couples C657 to C746. The chain crosses the membrane as a helical span at residues 659–680; the sequence is LQRLLVGLSSAMCYSALVTKTN. Residues 681-703 are Cytoplasmic-facing; sequence RIARILAGSKKKICTRKPRFMSA. Residues 704 to 727 form a helical membrane-spanning segment; that stretch reads WAQVIIASILISVQLTLVVTLIIM. The Extracellular portion of the chain corresponds to 728 to 750; sequence EPPMPILSYPSIKEVYLICNTSN. Residues 751–772 traverse the membrane as a helical segment; sequence LGVVAPVGYNGLLIMSCTYYAF. The Cytoplasmic portion of the chain corresponds to 773–785; it reads KTRNVPANFNEAK. Residues 786 to 807 form a helical membrane-spanning segment; the sequence is YIAFTMYTTCIIWLAFVPIYFG. Residues 808–815 are Extracellular-facing; it reads SNYKIITT. The chain crosses the membrane as a helical span at residues 816-840; sequence CFAVSLSVTVALGCMFTPKMYIIIA. At 841 to 1199 the chain is on the cytoplasmic side; it reads KPERNVRSAF…RDYKQSSSTL (359 aa). S853 is subject to Phosphoserine. At T871 the chain carries Phosphothreonine. 3 disordered regions span residues 882–905, 959–1036, and 1056–1081; these read GAGN…QAPK, EEDN…QPKS, and HAVL…PPQH. A compositionally biased stretch (polar residues) spans 885–895; that stretch reads NANSNGKSVSW. Phosphoserine occurs at positions 894 and 969. The span at 1012 to 1033 shows a compositional bias: pro residues; sequence GLPPPLPQQQPQQPPPQQPPQQ. Position 1098 is a phosphoserine (S1098). Residues 1120–1177 are disordered; the sequence is EREGNTEEDELEEEEDLPTASKLTPEDSPALTPPSPFRDSVASGSSVPSSPVSESVLC. Over residues 1125–1136 the composition is skewed to acidic residues; sequence TEEDELEEEEDL. Position 1147 is a phosphoserine (S1147). Position 1151 is a phosphothreonine (T1151). Residue S1154 is modified to Phosphoserine. Low complexity predominate over residues 1159–1175; it reads SVASGSSVPSSPVSESV.

Belongs to the G-protein coupled receptor 3 family. Homodimer; disulfide-linked. The PPXXF motif binds HOMER1, HOMER2 and HOMER3. Interacts with TAMALIN. Interacts with RYR1, RYR2, ITPR1, SHANK1 and SHANK3. Interacts with SIAH1. As to expression, predominantly expressed in cerebellar Purkinje cells, CA2-CA3 pyramidal cells of the hippocampus, and mitral and tufted cells of the olfactory bulb.

Its subcellular location is the cell membrane. It is found in the postsynaptic cell membrane. The protein resides in the cell projection. It localises to the dendrite. G-protein coupled receptor for glutamate. Ligand binding causes a conformation change that triggers signaling via guanine nucleotide-binding proteins (G proteins) and modulates the activity of down-stream effectors. Signaling activates a phosphatidylinositol-calcium second messenger system. May participate in the central action of glutamate in the CNS, such as long-term potentiation in the hippocampus and long-term depression in the cerebellum. May function in the light response in the retina. Induces GRID1 and GRID2 cation-channel activation via GNAQ-PLC-PKC pathway in dopaminergic neurons and cerebellar Purkinje cell, respectively. This chain is Metabotropic glutamate receptor 1 (Grm1), found in Rattus norvegicus (Rat).